The sequence spans 306 residues: Porphobilinogen deaminase (306 aa).

Residue C239 is modified to S-(dipyrrolylmethanemethyl)cysteine.

Belongs to the HMBS family. In terms of assembly, monomer. Dipyrromethane is required as a cofactor.

It carries out the reaction 4 porphobilinogen + H2O = hydroxymethylbilane + 4 NH4(+). Its pathway is porphyrin-containing compound metabolism; protoporphyrin-IX biosynthesis; coproporphyrinogen-III from 5-aminolevulinate: step 2/4. Functionally, tetrapolymerization of the monopyrrole PBG into the hydroxymethylbilane pre-uroporphyrinogen in several discrete steps. The polypeptide is Porphobilinogen deaminase (Helicobacter pylori (strain Shi470)).